Here is a 434-residue protein sequence, read N- to C-terminus: Purple acid phosphatase 22 (434 aa).

Residues 1–22 (MKLFGLFLSFTLLFLCPFISQA) form the signal peptide. N-linked (GlcNAc...) asparagine glycosylation is present at Asn116. Asp148, Asp175, and Tyr178 together coordinate Fe cation. Asp175 contacts Zn(2+). Residues Asn208 and His292 each contribute to the Zn(2+) site. Asn208 contributes to the substrate binding site. The active-site Proton donor is the His302. His329 lines the Zn(2+) pocket. Position 329–331 (329–331 (HVH)) interacts with substrate. His331 provides a ligand contact to Fe cation. Asn403 is a glycosylation site (N-linked (GlcNAc...) asparagine).

Belongs to the metallophosphoesterase superfamily. Purple acid phosphatase family. In terms of assembly, homodimer. Fe cation is required as a cofactor. It depends on Zn(2+) as a cofactor. Expressed in roots, stems, leaves, flowers and siliques.

The protein resides in the secreted. It carries out the reaction a phosphate monoester + H2O = an alcohol + phosphate. The chain is Purple acid phosphatase 22 (PAP22) from Arabidopsis thaliana (Mouse-ear cress).